A 388-amino-acid chain; its full sequence is Succinate--CoA ligase [ADP-forming] subunit beta (388 aa).

In terms of domain architecture, ATP-grasp spans Lys-9–His-244. Residues Lys-46, Gly-53–Gly-55, Glu-99, Thr-102, and Glu-107 each bind ATP. Positions 199 and 213 each coordinate Mg(2+). Substrate-binding positions include Asn-264 and Gly-321–Val-323.

The protein belongs to the succinate/malate CoA ligase beta subunit family. In terms of assembly, heterotetramer of two alpha and two beta subunits. Requires Mg(2+) as cofactor.

It carries out the reaction succinate + ATP + CoA = succinyl-CoA + ADP + phosphate. The enzyme catalyses GTP + succinate + CoA = succinyl-CoA + GDP + phosphate. Its pathway is carbohydrate metabolism; tricarboxylic acid cycle; succinate from succinyl-CoA (ligase route): step 1/1. Its function is as follows. Succinyl-CoA synthetase functions in the citric acid cycle (TCA), coupling the hydrolysis of succinyl-CoA to the synthesis of either ATP or GTP and thus represents the only step of substrate-level phosphorylation in the TCA. The beta subunit provides nucleotide specificity of the enzyme and binds the substrate succinate, while the binding sites for coenzyme A and phosphate are found in the alpha subunit. The protein is Succinate--CoA ligase [ADP-forming] subunit beta of Shewanella baltica (strain OS195).